The following is a 1165-amino-acid chain: ATP-dependent helicase/deoxyribonuclease subunit B (1165 aa).

A UvrD-like helicase ATP-binding domain is found at 1–324 (MRFIIGGAGS…LVEAQNRREE (324 aa)). 6 to 13 (GGAGSGKS) serves as a coordination point for ATP. Residues 282–597 (PLRFRGAPEL…IVGTVERSRH (316 aa)) enclose the UvrD-like helicase C-terminal domain. Residues C803, C1121, C1124, and C1130 each contribute to the [4Fe-4S] cluster site.

It belongs to the helicase family. AddB/RexB type 1 subfamily. In terms of assembly, heterodimer of AddA and AddB. Mg(2+) serves as cofactor. Requires [4Fe-4S] cluster as cofactor.

Functionally, the heterodimer acts as both an ATP-dependent DNA helicase and an ATP-dependent, dual-direction single-stranded exonuclease. Recognizes the chi site generating a DNA molecule suitable for the initiation of homologous recombination. The AddB subunit has 5' -&gt; 3' nuclease activity but not helicase activity. This is ATP-dependent helicase/deoxyribonuclease subunit B from Symbiobacterium thermophilum (strain DSM 24528 / JCM 14929 / IAM 14863 / T).